We begin with the raw amino-acid sequence, 930 residues long: MLLGWASLLLCAFRLPLAAVGPAATPAQDKAGQPPTAAAAAQPRRRQGEEVQERAEPPGHPHPLAQRRRSKGLVQNIDQLYSGGGKVGYLVYAGGRRFLLDLERDGSVGIAGFVPAGGGTSAPWRHRSHCFYRGTVDGSPRSLAVFDLCGGLDGFFAVKHARYTLKPLLRGPWAEEEKGRVYGDGSARILHVYTREGFSFEALPPRASCETPASTPEAHEHAPAHSNPSGRAALASQLLDQSALSPAGGSGPQTWWRRRRRSISRARQVELLLVADASMARLYGRGLQHYLLTLASIANRLYSHASIENHIRLAVVKVVVLGDKDKSLEVSKNAATTLKNFCKWQHQHNQLGDDHEEHYDAAILFTREDLCGHHSCDTLGMADVGTICSPERSCAVIEDDGLHAAFTVAHEIGHLLGLSHDDSKFCEETFGSTEDKRLMSSILTSIDASKPWSKCTSATITEFLDDGHGNCLLDLPRKQILGPEELPGQTYDATQQCNLTFGPEYSVCPGMDVCARLWCAVVRQGQMVCLTKKLPAVEGTPCGKGRICLQGKCVDKTKKKYYSTSSHGNWGSWGSWGQCSRSCGGGVQFAYRHCNNPAPRNNGRYCTGKRAIYRSCSLMPCPPNGKSFRHEQCEAKNGYQSDAKGVKTFVEWVPKYAGVLPADVCKLTCRAKGTGYYVVFSPKVTDGTECRLYSNSVCVRGKCVRTGCDGIIGSKLQYDKCGVCGGDNSSCTKIVGTFNKKSKGYTDVVRIPEGATHIKVRQFKAKDQTRFTAYLALKKKNGEYLINGKYMISTSETIIDINGTVMNYSGWSHRDDFLHGMGYSATKEILIVQILATDPTKPLDVRYSFFVPKKSTPKVNSVTSHGSNKVGSHTSQPQWVTGPWLACSRTCDTGWHTRTVQCQDGNRKLAKGCPLSQRPSAFKQCLLKKC.

Residues 1 to 16 (MLLGWASLLLCAFRLP) form the signal peptide. The propeptide occupies 17 to 261 (LAAVGPAATP…PQTWWRRRRR (245 aa)). Disordered stretches follow at residues 24-69 (ATPA…QRRR) and 206-231 (RASC…PSGR). The segment covering 31-42 (AGQPPTAAAAAQ) has biased composition (low complexity). The segment covering 46-59 (RQGEEVQERAEPPG) has biased composition (basic and acidic residues). A Cysteine switch motif is present at residues 207–214 (ASCETPAS). Zn(2+) is bound at residue C209. The Peptidase M12B domain maps to 267–476 (RQVELLLVAD…GHGNCLLDLP (210 aa)). Cystine bridges form between C342/C394, C371/C376, C388/C471, C426/C455, C497/C519, C508/C529, C514/C548, and C542/C553. A Zn(2+)-binding site is contributed by H410. E411 is a catalytic residue. The Zn(2+) site is built by H414 and H420. A Disintegrin domain is found at 485–566 (ELPGQTYDAT…TKKKYYSTSS (82 aa)). N498 carries an N-linked (GlcNAc...) asparagine glycan. Positions 567–622 (HGNWGSWGSWGQCSRSCGGGVQFAYRHCNNPAPRNNGRYCTGKRAIYRSCSLMPCP) constitute a TSP type-1 1 domain. Residues W570 and W573 are each glycosylated (C-linked (Man) tryptophan). 3 disulfides stabilise this stretch: C579-C616, C583-C621, and C594-C606. Residue S582 is glycosylated (O-linked (Fuc...) serine). 3 N-linked (GlcNAc...) asparagine glycosylation sites follow: N728, N802, and N807. The segment at 732–874 (TKIVGTFNKK…HGSNKVGSHT (143 aa)) is spacer. The TSP type-1 2 domain occupies 875–929 (SQPQWVTGPWLACSRTCDTGWHTRTVQCQDGNRKLAKGCPLSQRPSAFKQCLLKK).

The cofactor is Zn(2+). The precursor is cleaved by furin and PCSK7 outside of the cell. Post-translationally, glycosylated. Can be O-fucosylated by POFUT2 on a serine or a threonine residue found within the consensus sequence C1-X(2)-(S/T)-C2-G of the TSP type-1 repeat domains where C1 and C2 are the first and second cysteine residue of the repeat, respectively. Fucosylated repeats can then be further glycosylated by the addition of a beta-1,3-glucose residue by the glucosyltransferase, B3GALTL. Fucosylation mediates the efficient secretion of ADAMTS family members. Can also be C-glycosylated with one or two mannose molecules on tryptophan residues within the consensus sequence W-X-X-W of the TPRs, and N-glycosylated. These other glycosylations can also facilitate secretion. In terms of tissue distribution, expressed at low level in placenta primarily but also detected in heart and brain, cervix, uterus, bladder, esophagus, rib cartilage, chondroblastoma, fibrous tissue and a joint capsule from an arthritic patient.

The protein localises to the secreted. Its subcellular location is the extracellular space. The protein resides in the extracellular matrix. In terms of biological role, metalloproteinase that plays an important role in connective tissue organization, development, inflammation and cell migration. Extracellular matrix (ECM) degrading enzyme that show proteolytic activity toward the hyalectan group of chondroitin sulfate proteoglycans (CSPGs) including ACAN, VCAN, BCAN and NCAN. Cleavage within the hyalectans occurs at Glu-Xaa recognition motifs. Plays a role in embryonic development, including limb and cardiac morphogenesis, and skeletal muscle development through its VCAN remodeling properties. Cleaves VCAN in the pericellular matrix surrounding myoblasts, facilitating myoblast contact and fusion which is required for skeletal muscle development and regeneration. Participates in development of brown adipose tissue and browning of white adipose tissue. Plays an important role for T-lymphocyte migration from draining lymph nodes following viral infection. This chain is A disintegrin and metalloproteinase with thrombospondin motifs 5 (ADAMTS5), found in Homo sapiens (Human).